The chain runs to 156 residues: MEKTFPMTKEGLDKLKAELENLKLVKRPEVIDRIKVARSYGDLSENSEYEAAKDEQAFIEGRISTVETMIRYAEIVNNAKIAKDEVALGKNVTFVEVGETDEESYQIVGTAEADPFTGKISNESPIARVLIGKKVGDIVNVPLPVGEMTVKIVKVD.

The stretch at 2–27 (EKTFPMTKEGLDKLKAELENLKLVKR) forms a coiled coil.

Belongs to the GreA/GreB family.

In terms of biological role, necessary for efficient RNA polymerase transcription elongation past template-encoded arresting sites. The arresting sites in DNA have the property of trapping a certain fraction of elongating RNA polymerases that pass through, resulting in locked ternary complexes. Cleavage of the nascent transcript by cleavage factors such as GreA or GreB allows the resumption of elongation from the new 3'terminus. GreA releases sequences of 2 to 3 nucleotides. This is Transcription elongation factor GreA from Lactococcus lactis subsp. cremoris (strain SK11).